Reading from the N-terminus, the 131-residue chain is Ribosome-binding factor A (131 aa).

It belongs to the RbfA family. In terms of assembly, monomer. Binds 30S ribosomal subunits, but not 50S ribosomal subunits or 70S ribosomes.

The protein resides in the cytoplasm. Its function is as follows. One of several proteins that assist in the late maturation steps of the functional core of the 30S ribosomal subunit. Associates with free 30S ribosomal subunits (but not with 30S subunits that are part of 70S ribosomes or polysomes). Required for efficient processing of 16S rRNA. May interact with the 5'-terminal helix region of 16S rRNA. The sequence is that of Ribosome-binding factor A from Protochlamydia amoebophila (strain UWE25).